Reading from the N-terminus, the 688-residue chain is Glycine--tRNA ligase beta subunit (688 aa).

It belongs to the class-II aminoacyl-tRNA synthetase family. Tetramer of two alpha and two beta subunits.

The protein resides in the cytoplasm. It carries out the reaction tRNA(Gly) + glycine + ATP = glycyl-tRNA(Gly) + AMP + diphosphate. This Histophilus somni (strain 2336) (Haemophilus somnus) protein is Glycine--tRNA ligase beta subunit.